We begin with the raw amino-acid sequence, 223 residues long: Protein FAM3D (223 aa).

Positions 1–25 are cleaved as a signal peptide; that stretch reads MRVAGLIRVVVFIFTIVTMWVFLRS. 2 disulfide bridges follow: Cys-54–Cys-82 and Cys-60–Cys-217. Residues 62–221 enclose the GG-type lectin domain; it reads NNFFAFKISS…LELEGCVPRK (160 aa). The N-linked (GlcNAc...) asparagine glycan is linked to Asn-106.

This sequence belongs to the FAM3 family.

The protein localises to the secreted. This is Protein FAM3D from Mus musculus (Mouse).